The following is a 217-amino-acid chain: Ribosomal RNA small subunit methyltransferase G (217 aa).

Residues Gly-79, Leu-84, 102–104 (DST), 130–131 (VE), and Arg-144 contribute to the S-adenosyl-L-methionine site.

Belongs to the methyltransferase superfamily. RNA methyltransferase RsmG family.

The protein localises to the cytoplasm. Functionally, specifically methylates the N7 position of a guanine in 16S rRNA. This chain is Ribosomal RNA small subunit methyltransferase G, found in Chlorobaculum tepidum (strain ATCC 49652 / DSM 12025 / NBRC 103806 / TLS) (Chlorobium tepidum).